Consider the following 712-residue polypeptide: Probable metal-nicotianamine transporter YSL11 (712 aa).

Residues 25–48 (RRNTTAAARGNAGEEEEEAEAVAP) are disordered. The next 14 helical transmembrane spans lie at 70-90 (AFVV…KLSL), 93-113 (GVIP…VRLW), 138-158 (CVVS…LFGM), 180-200 (LGWI…ALVP), 242-262 (LGKY…YTAG), 300-320 (IVNV…WPLI), 345-365 (VFIT…KVFG), 418-438 (VAIG…PLII), 446-466 (ILIA…GSGL), 478-498 (LAIF…LVGL), 532-552 (FVSQ…VFWL), 593-613 (LTLC…KDLV), 631-651 (FYLG…LYFW), and 666-686 (VASG…VLSL).

This sequence belongs to the YSL (TC 2.A.67.2) family.

It localises to the membrane. May be involved in the transport of nicotianamine-chelated metals. This is Probable metal-nicotianamine transporter YSL11 (YSL11) from Oryza sativa subsp. japonica (Rice).